A 296-amino-acid chain; its full sequence is Nucleotide-binding protein M6_Spy0559 (296 aa).

13-20 is an ATP binding site; sequence GMSGAGKT. 63-66 is a GTP binding site; the sequence is DMRS.

Belongs to the RapZ-like family.

Displays ATPase and GTPase activities. This Streptococcus pyogenes serotype M6 (strain ATCC BAA-946 / MGAS10394) protein is Nucleotide-binding protein M6_Spy0559.